The following is a 316-amino-acid chain: Cyclin-dependent kinase inhibitor 1C (316 aa).

Arginine 107 is modified (omega-N-methylarginine). The disordered stretch occupies residues 124–153; that stretch reads ESLDGLEEAPEQLPSVPVPAPASTPPPVPV. Residues 139 to 153 show a composition bias toward pro residues; sequence VPVPAPASTPPPVPV. A run of 9 repeats spans residues 156–159, 160–163, 180–183, 184–187, 188–191, 198–201, 202–205, 206–209, and 210–213. The 9 X 4 AA repeats of P-A-P-A stretch occupies residues 156–213; it reads PAPAPAPAPVAAPVAAPVAVAVLAPAPAPAPAPAPAPAPVAAPAPAPAPAPAPAPAPA. The segment covering 181 to 217 has biased composition (pro residues); sequence APAPAPAPAPAPAPVAAPAPAPAPAPAPAPAPAPAPD. The segment at 181–260 is disordered; it reads APAPAPAPAP…AAGTAAASAN (80 aa). A compositionally biased stretch (polar residues) spans 223–233; that stretch reads SAEQGANQGQR. Positions 251–260 are enriched in low complexity; the sequence is AAGTAAASAN. Serine 268 bears the Phosphoserine mark. Residues 278–281 carry the Nuclear localization signal motif; sequence KRKR. The segment at 278 to 316 is disordered; the sequence is KRKRSAPEKSSGDVPAPCPSPSAAPGVGSVEQTPRKRLR.

The protein belongs to the CDI family. In terms of assembly, interacts with PCNA. Expressed in the heart, brain, lung, skeletal muscle, kidney, pancreas and testis. Expressed in the eye. High levels are seen in the placenta while low levels are seen in the liver.

It is found in the nucleus. Its function is as follows. Potent tight-binding inhibitor of several G1 cyclin/CDK complexes (cyclin E-CDK2, cyclin D2-CDK4, and cyclin A-CDK2) and, to lesser extent, of the mitotic cyclin B-CDC2. Negative regulator of cell proliferation. May play a role in maintenance of the non-proliferative state throughout life. In Homo sapiens (Human), this protein is Cyclin-dependent kinase inhibitor 1C (CDKN1C).